We begin with the raw amino-acid sequence, 1221 residues long: MLLQESAGVWLALALVTALTPSPSMAVPWQDCTGAECPLLENCIEEALEPGACCATCVQQGCACEGYQYYDCVQGGFVDGRVPAGQSYFVDFGSTECSCPPGGGKISCQFMLCPELPPNCIEAVVVADSCPQCGQVGCVHSGRKYAAGHTVHLSSCRACHCPDAGGELICYQLPGCHGNFSDAEEGDSERQYEDPYSYDQEVAEAEATTAIVNEVQAGAEGPPAALGGGNLPPSSIRVTPWPVALPRPTAAAALGPPAPVQAKARRVTLDTEEDEEEEEEETLVTEPPTAGSPGRLDSLPTRSPARPGFPVQEKEAEAKAGPEENLIPDAQVTPRSVMQEGAAPLPRSGLAALSPSLATDSSSEDPVKPSDHPTLSTLPPDRAQVSPSPETPEEIPQHPQLLPRFRAEEDIDPNSVHSVPRGDLDGSTKDLIETCCAAGQQWAIDNDECQEIPENGAQSDICRIAQRQCCISYLKEKSCVAGVMGAKEGETCGAEDNDTCGVSLYKQCCDCCGLGLRVRAEGQSCESNPNLGYPCNHVMLSCCEGEEPLIVPEVRRPPEPEAAPRRVSEMEMASREALSLGTEAELPNSLPGDDQDECLMLPGELCQHLCINTVGSYRCACFPGFELQGDGRTCRPDRGAPQLDTARESAPRSESAQVSPNTIPLPVPQPNTCKDNGPCRQVCRVVGDTAMCSCFPGYAIMADGVSCEDQDECLMGTHDCSWKQFCVNTLGSFYCVNHTVLCAEGYILNAHRKCVDINECVTDLHTCTRAEHCVNTPGSFQCYKALTCEPGYVLTDGECTDVDECVTGTHNCQAGFSCQNTKGSFYCQARQRCMDGFLQDPEGNCVDINECTSLLEPCRSGFSCINTVGSYTCQRNPLVCGRGYHANEEGSECVDVNECETGVHRCGEGQLCYNLPGSYRCDCKPGFQRDAFGRTCIDVNECWVSPGRLCQHTCENTPGSYRCSCAAGFLLAADGKHCEDVNECETRRCSQECANIYGSYQCYCRQGYQLAEDGHTCTDIDECAQGAGILCTFRCVNVPGSYQCACPEQGYTMMANGRSCKDLDECALGTHNCSEAETCHNIQGSFRCLRFDCPPNYVRVSETKCERTTCQDITECQTSPARITHYQLNFQTGLLVPAHIFRIGPAPAFAGDTISLTITKGNEEGYFVTRRLNAYTGVVSLQRSVLEPRDFALDVEMKLWRQGSVTTFLAKMYIFFTTFAP.

An N-terminal signal peptide occupies residues 1 to 26 (MLLQESAGVWLALALVTALTPSPSMA). Residues 27-176 (VPWQDCTGAE…ELICYQLPGC (150 aa)) are subdomain NA (Cys-rich). The interval 27–434 (VPWQDCTGAE…DGSTKDLIET (408 aa)) is n. Residues 177 to 434 (HGNFSDAEEG…DGSTKDLIET (258 aa)) form a subdomain NB (Cys-free) region. N-linked (GlcNAc...) asparagine glycosylation is present at Asn179. 2 disordered regions span residues 248 to 329 (PTAA…LIPD) and 341 to 399 (GAAP…PQHP). A compositionally biased stretch (acidic residues) spans 270-283 (DTEEDEEEEEEETL). Over residues 312–322 (QEKEAEAKAGP) the composition is skewed to basic and acidic residues. Residues 421–423 (RGD) carry the Cell attachment site motif. 11 disulfide bridges follow: Cys435/Cys462, Cys436/Cys469, Cys449/Cys470, Cys479/Cys508, Cys492/Cys509, Cys511/Cys535, Cys512/Cys542, Cys525/Cys543, Cys598/Cys610, Cys606/Cys619, and Cys621/Cys634. Anaphylatoxin-like domains follow at residues 435–477 (CCAA…LKEK), 478–510 (SCVA…QCCD), and 511–543 (CCGL…LSCC). A glycan (N-linked (GlcNAc...) asparagine) is linked at Asn497. The EGF-like 1; calcium-binding domain maps to 594 to 635 (DQDECLMLPGELCQHLCINTVGSYRCACFPGFELQGDGRTCR). A disordered region spans residues 633–661 (TCRPDRGAPQLDTARESAPRSESAQVSPN). Positions 652–661 (RSESAQVSPN) are enriched in polar residues. In terms of domain architecture, EGF-like 2 spans 669 to 708 (QPNTCKDNGPCRQVCRVVGDTAMCSCFPGYAIMADGVSCE). 5 disulfides stabilise this stretch: Cys673-Cys683, Cys679-Cys692, Cys694-Cys707, Cys713-Cys726, and Cys720-Cys735. One can recognise an EGF-like 3; calcium-binding domain in the interval 709–755 (DQDECLMGTHDCSWKQFCVNTLGSFYCVNHTVLCAEGYILNAHRKCV). N-linked (GlcNAc...) asparagine glycosylation occurs at Asn737. Cys742 and Cys754 form a disulfide bridge. An EGF-like 4; calcium-binding domain is found at 756–800 (DINECVTDLHTCTRAEHCVNTPGSFQCYKALTCEPGYVLTDGECT). One can recognise an EGF-like 5; calcium-binding domain in the interval 801 to 846 (DVDECVTGTHNCQAGFSCQNTKGSFYCQARQRCMDGFLQDPEGNCV). 3 disulfides stabilise this stretch: Cys805-Cys818, Cys812-Cys827, and Cys833-Cys845. Positions 847–894 (DINECTSLLEPCRSGFSCINTVGSYTCQRNPLVCGRGYHANEEGSECV) constitute an EGF-like 6; calcium-binding domain. The region spanning 895–937 (DVNECETGVHRCGEGQLCYNLPGSYRCDCKPGFQRDAFGRTCI) is the EGF-like 7; calcium-binding domain. Disulfide bonds link Cys899–Cys912, Cys906–Cys921, Cys923–Cys936, Cys942–Cys954, Cys950–Cys963, Cys965–Cys978, Cys984–Cys993, Cys989–Cys1002, Cys1004–Cys1017, Cys1023–Cys1035, Cys1031–Cys1044, Cys1046–Cys1060, Cys1066–Cys1079, Cys1073–Cys1088, and Cys1093–Cys1105. The EGF-like 8; calcium-binding domain occupies 938–979 (DVNECWVSPGRLCQHTCENTPGSYRCSCAAGFLLAADGKHCE). Residues 980–1018 (DVNECETRRCSQECANIYGSYQCYCRQGYQLAEDGHTCT) enclose the EGF-like 9; calcium-binding domain. One can recognise an EGF-like 10; calcium-binding domain in the interval 1019 to 1061 (DIDECAQGAGILCTFRCVNVPGSYQCACPEQGYTMMANGRSCK). Residues 1062 to 1106 (DLDECALGTHNCSEAETCHNIQGSFRCLRFDCPPNYVRVSETKCE) enclose the EGF-like 11; calcium-binding domain. A glycan (N-linked (GlcNAc...) asparagine) is linked at Asn1072. Residues 1111-1221 (QDITECQTSP…MYIFFTTFAP (111 aa)) form a domain III region.

It belongs to the fibulin family. As to quaternary structure, homotrimer; disulfide-linked. Interacts with LAMA2. Interacts with FBN1 (via N-terminal domain). Forms a ternary complex with ELN and FBN1. As to expression, component of both basement membranes and other connective tissues.

It is found in the secreted. The protein localises to the extracellular space. The protein resides in the extracellular matrix. Functionally, its binding to fibronectin and some other ligands is calcium dependent. May act as an adapter that mediates the interaction between FBN1 and ELN. This Mus musculus (Mouse) protein is Fibulin-2 (Fbln2).